The sequence spans 411 residues: Arginine deiminase (411 aa).

Cysteine 399 (amidino-cysteine intermediate) is an active-site residue.

The protein belongs to the arginine deiminase family.

The protein localises to the cytoplasm. The enzyme catalyses L-arginine + H2O = L-citrulline + NH4(+). Its pathway is amino-acid degradation; L-arginine degradation via ADI pathway; carbamoyl phosphate from L-arginine: step 1/2. The polypeptide is Arginine deiminase (Latilactobacillus sakei subsp. sakei (strain 23K) (Lactobacillus sakei subsp. sakei)).